Consider the following 70-residue polypeptide: MIFKVFYQEKMTEVPVRENTKVLYLEADSERDVRAKLKKFAYNIEFVQSVTGAHLEYEKQNADLKLTEIV.

The protein belongs to the RNA polymerase subunit epsilon family. RNAP is composed of a core of 2 alpha, a beta and a beta' subunit. The core is associated with a delta subunit, and at least one of epsilon or omega. When a sigma factor is associated with the core the holoenzyme is formed, which can initiate transcription.

It carries out the reaction RNA(n) + a ribonucleoside 5'-triphosphate = RNA(n+1) + diphosphate. Functionally, a non-essential component of RNA polymerase (RNAP). In Bacillus cytotoxicus (strain DSM 22905 / CIP 110041 / 391-98 / NVH 391-98), this protein is DNA-directed RNA polymerase subunit epsilon.